The following is a 520-amino-acid chain: Bifunctional purine biosynthesis protein PurH (520 aa).

The MGS-like domain occupies 1 to 147 (MAKIGRALIS…KNNRDVTVVV (147 aa)).

It belongs to the PurH family.

It catalyses the reaction (6R)-10-formyltetrahydrofolate + 5-amino-1-(5-phospho-beta-D-ribosyl)imidazole-4-carboxamide = 5-formamido-1-(5-phospho-D-ribosyl)imidazole-4-carboxamide + (6S)-5,6,7,8-tetrahydrofolate. It carries out the reaction IMP + H2O = 5-formamido-1-(5-phospho-D-ribosyl)imidazole-4-carboxamide. The protein operates within purine metabolism; IMP biosynthesis via de novo pathway; 5-formamido-1-(5-phospho-D-ribosyl)imidazole-4-carboxamide from 5-amino-1-(5-phospho-D-ribosyl)imidazole-4-carboxamide (10-formyl THF route): step 1/1. Its pathway is purine metabolism; IMP biosynthesis via de novo pathway; IMP from 5-formamido-1-(5-phospho-D-ribosyl)imidazole-4-carboxamide: step 1/1. This Citrifermentans bemidjiense (strain ATCC BAA-1014 / DSM 16622 / JCM 12645 / Bem) (Geobacter bemidjiensis) protein is Bifunctional purine biosynthesis protein PurH.